A 103-amino-acid polypeptide reads, in one-letter code: Large ribosomal subunit protein mL41 (103 aa).

This sequence belongs to the mitochondrion-specific ribosomal protein mL41 family. Component of the mitochondrial large ribosomal subunit (mt-LSU). Mature N.crassa 74S mitochondrial ribosomes consist of a small (37S) and a large (54S) subunit. The 37S small subunit contains a 16S ribosomal RNA (16S mt-rRNA) and 32 different proteins. The 54S large subunit contains a 23S rRNA (23S mt-rRNA) and 42 different proteins.

The protein resides in the mitochondrion. Its function is as follows. Component of the mitochondrial ribosome (mitoribosome), a dedicated translation machinery responsible for the synthesis of mitochondrial genome-encoded proteins, including at least some of the essential transmembrane subunits of the mitochondrial respiratory chain. The mitoribosomes are attached to the mitochondrial inner membrane and translation products are cotranslationally integrated into the membrane. This chain is Large ribosomal subunit protein mL41 (mrpl27), found in Neurospora crassa (strain ATCC 24698 / 74-OR23-1A / CBS 708.71 / DSM 1257 / FGSC 987).